Here is a 177-residue protein sequence, read N- to C-terminus: R-phycoerythrin beta chain (177 aa).

The (2R,3E)-phycoerythrobilin site is built by Asn-35 and Asp-39. 3 residues coordinate phycourobilin: Cys-50, Asp-54, and Cys-61. Residues Asn-72, 77-78 (RR), Cys-82, and 84-85 (RD) each bind (2R,3E)-phycoerythrobilin. At Asn-72 the chain carries N4-methylasparagine. Residue 147–148 (SQ) coordinates phycourobilin. Positions 154 and 158 each coordinate (2R,3E)-phycoerythrobilin.

The protein belongs to the phycobiliprotein family. In terms of assembly, heterododecamer of 6 alpha and 6 beta chains. The basic functional unit of phycobiliproteins is a ring-shaped hexamer formed from two back-to-back trimers contacting via the alpha chain subunits. The trimers are composed of alpha/beta subunit heterodimers arranged around a three-fold axis of symmetry. The phycoerythrins also contain a gamma subunit which is located in the center of the hexamer. Post-translationally, contains two covalently linked phycoerythrobilin chromophores and one covalently linked phycourobilin chromophore.

It localises to the plastid. The protein resides in the chloroplast thylakoid membrane. Functionally, light-harvesting photosynthetic tetrapyrrole chromophore-protein from the phycobiliprotein complex. This is R-phycoerythrin beta chain (rpeB) from Agarophyton chilense (Red seaweed).